The sequence spans 504 residues: ATP synthase subunit beta (504 aa).

The interval 1 to 23 (MAKAATPKETAAAKKPAAPKKAA) is disordered. 182–189 (GGAGVGKT) serves as a coordination point for ATP.

The protein belongs to the ATPase alpha/beta chains family. As to quaternary structure, F-type ATPases have 2 components, CF(1) - the catalytic core - and CF(0) - the membrane proton channel. CF(1) has five subunits: alpha(3), beta(3), gamma(1), delta(1), epsilon(1). CF(0) has three main subunits: a(1), b(2) and c(9-12). The alpha and beta chains form an alternating ring which encloses part of the gamma chain. CF(1) is attached to CF(0) by a central stalk formed by the gamma and epsilon chains, while a peripheral stalk is formed by the delta and b chains.

It localises to the cell inner membrane. The enzyme catalyses ATP + H2O + 4 H(+)(in) = ADP + phosphate + 5 H(+)(out). Functionally, produces ATP from ADP in the presence of a proton gradient across the membrane. The catalytic sites are hosted primarily by the beta subunits. This chain is ATP synthase subunit beta, found in Rhizobium meliloti (strain 1021) (Ensifer meliloti).